The primary structure comprises 218 residues: Ribulose-phosphate 3-epimerase (218 aa).

Position 10 (Ser-10) interacts with substrate. A divalent metal cation-binding residues include His-35, Asp-37, and His-68. Residue Asp-37 is the Proton acceptor of the active site. Substrate is bound by residues His-68, 144–147, 177–179, and 199–200; these read GFSG, DGG, and GS. Asp-177 serves as a coordination point for a divalent metal cation. The Proton donor role is filled by Asp-177.

Belongs to the ribulose-phosphate 3-epimerase family. Requires a divalent metal cation as cofactor.

The catalysed reaction is D-ribulose 5-phosphate = D-xylulose 5-phosphate. Its pathway is carbohydrate degradation. Catalyzes the reversible epimerization of D-ribulose 5-phosphate to D-xylulose 5-phosphate. The polypeptide is Ribulose-phosphate 3-epimerase (Treponema pallidum (strain Nichols)).